The chain runs to 38 residues: Large ribosomal subunit protein bL36 (38 aa).

The protein belongs to the bacterial ribosomal protein bL36 family.

The chain is Large ribosomal subunit protein bL36 from Porphyromonas gingivalis (strain ATCC 33277 / DSM 20709 / CIP 103683 / JCM 12257 / NCTC 11834 / 2561).